A 318-amino-acid chain; its full sequence is Polyprenal reductase (318 aa).

Over 1 to 19 (MAPWAAAQLWALNPLRALW) the chain is Cytoplasmic. A helical membrane pass occupies residues 20-40 (LTLAAAFLLTLLLQLVPPGLL). The Lumenal portion of the chain corresponds to 41-80 (PGCALFQDLIRYGKTKREGQSRPAVCRVFDVPKRYFSHFY). Residues 81–101 (IISALWNGFLLWHLTQSVFLG) form a helical membrane-spanning segment. The Cytoplasmic portion of the chain corresponds to 102–119 (VPFPNWLHGLLRILGASQ). Residues 120–140 (FQGGELALSAFLVLVFLWLHS) form a helical membrane-spanning segment. Residues 141–156 (LRRLFECFYVSVFSNT) lie on the Lumenal side of the membrane. The helical transmembrane segment at 157 to 177 (VIHIVQYCFGLVYYVLTGLTV) threads the bilayer. The Cytoplasmic portion of the chain corresponds to 178 to 194 (LSQVPMDGRNAYVIGKN). A helical transmembrane segment spans residues 195–215 (LLMQARWFHILGMLMFIWSSV). The Lumenal portion of the chain corresponds to 216-265 (HQYKCHVILGNLRKNKAGVVIHCNHRIPFGDWFEYVSSPNYLAELMIYIS). Residues 266 to 286 (MAVTFGFHNLTWWLVVTYVFF) form a helical membrane-spanning segment. The Cytoplasmic segment spans residues 287–318 (SQALSAFLSHKFYKSKFVSYPKHRKAFLPFLF).

Belongs to the steroid 5-alpha reductase family. Polyprenal reductase subfamily.

The protein localises to the endoplasmic reticulum membrane. It catalyses the reaction a di-trans,poly-cis-dolichal + NADP(+) = a di-trans,poly-cis-polyprenal + NADPH + H(+). It carries out the reaction a 3-oxo-5alpha-steroid + NADP(+) = a 3-oxo-Delta(4)-steroid + NADPH + H(+). The catalysed reaction is androst-4-ene-3,17-dione + NADPH + H(+) = 5alpha-androstan-3,17-dione + NADP(+). The enzyme catalyses 17beta-hydroxy-5alpha-androstan-3-one + NADP(+) = testosterone + NADPH + H(+). The protein operates within protein modification; protein glycosylation. Functionally, plays a key role in early steps of protein N-linked glycosylation by being involved in the conversion of polyprenol into dolichol. Acts as a polyprenal reductase that mediates the reduction of polyprenal into dolichal in a NADP-dependent mechanism. Dolichols are required for the synthesis of dolichol-linked monosaccharides and the oligosaccharide precursor used for N-glycosylation. Also able to convert testosterone (T) into 5-alpha-dihydrotestosterone (DHT). The protein is Polyprenal reductase (SRD5A3) of Ailuropoda melanoleuca (Giant panda).